A 129-amino-acid chain; its full sequence is Small ribosomal subunit protein uS11 (129 aa).

The protein belongs to the universal ribosomal protein uS11 family. Part of the 30S ribosomal subunit. Interacts with proteins S7 and S18. Binds to IF-3.

Its function is as follows. Located on the platform of the 30S subunit, it bridges several disparate RNA helices of the 16S rRNA. Forms part of the Shine-Dalgarno cleft in the 70S ribosome. In Geobacillus thermodenitrificans (strain NG80-2), this protein is Small ribosomal subunit protein uS11.